The chain runs to 492 residues: Glutamyl-tRNA(Gln) amidotransferase subunit A (492 aa).

Residues K78 and S158 each act as charge relay system in the active site. The Acyl-ester intermediate role is filled by S182.

This sequence belongs to the amidase family. GatA subfamily. As to quaternary structure, heterotrimer of A, B and C subunits.

It carries out the reaction L-glutamyl-tRNA(Gln) + L-glutamine + ATP + H2O = L-glutaminyl-tRNA(Gln) + L-glutamate + ADP + phosphate + H(+). Its function is as follows. Allows the formation of correctly charged Gln-tRNA(Gln) through the transamidation of misacylated Glu-tRNA(Gln) in organisms which lack glutaminyl-tRNA synthetase. The reaction takes place in the presence of glutamine and ATP through an activated gamma-phospho-Glu-tRNA(Gln). The chain is Glutamyl-tRNA(Gln) amidotransferase subunit A from Orientia tsutsugamushi (strain Ikeda) (Rickettsia tsutsugamushi).